The following is a 296-amino-acid chain: uncharacterized protein (296 aa).

2 consecutive CBS domains span residues 176 to 232 (GIKE…DKKV) and 236 to 292 (MRRD…KFPE).

This is an uncharacterized protein from Methanocaldococcus jannaschii (strain ATCC 43067 / DSM 2661 / JAL-1 / JCM 10045 / NBRC 100440) (Methanococcus jannaschii).